The following is a 513-amino-acid chain: Bifunctional pantoate ligase/cytidylate kinase (513 aa).

Positions 1-282 are pantoate--beta-alanine ligase; that stretch reads MGTFHRLTTT…VGQTRLIDNC (282 aa). Position 32-39 (32-39) interacts with ATP; the sequence is MGALHGGH. Catalysis depends on His-39, which acts as the Proton donor. Gln-63 serves as a coordination point for (R)-pantoate. Gln-63 lines the beta-alanine pocket. 152-155 lines the ATP pocket; that stretch reads GQKD. Gln-158 contacts (R)-pantoate. ATP-binding positions include Val-181 and 189-192; that span reads LSSR. The tract at residues 283 to 513 is cytidylate kinase; the sequence is LLDRRRPILA…HLYRSRFPQP (231 aa).

In the N-terminal section; belongs to the pantothenate synthetase family. It in the C-terminal section; belongs to the cytidylate kinase family. Type 1 subfamily.

It is found in the cytoplasm. The enzyme catalyses (R)-pantoate + beta-alanine + ATP = (R)-pantothenate + AMP + diphosphate + H(+). It catalyses the reaction CMP + ATP = CDP + ADP. The catalysed reaction is dCMP + ATP = dCDP + ADP. The protein operates within cofactor biosynthesis; (R)-pantothenate biosynthesis; (R)-pantothenate from (R)-pantoate and beta-alanine: step 1/1. Its function is as follows. Catalyzes the condensation of pantoate with beta-alanine in an ATP-dependent reaction via a pantoyl-adenylate intermediate. Catalyzes the transfer of a phosphate group from ATP to either CMP or dCMP to form CDP or dCDP and ADP, respectively. In Thermosynechococcus vestitus (strain NIES-2133 / IAM M-273 / BP-1), this protein is Bifunctional pantoate ligase/cytidylate kinase.